A 293-amino-acid polypeptide reads, in one-letter code: Foldase protein PrsA 2 (293 aa).

A signal peptide spans 1–20 (MKKKLILGLVMMMALFSLAA). Residue cysteine 21 is the site of N-palmitoyl cysteine attachment. The S-diacylglycerol cysteine moiety is linked to residue cysteine 21. The 92-residue stretch at 135-226 (QPDITVSHIL…YGYHIIQMDK (92 aa)) folds into the PpiC domain.

Belongs to the PrsA family.

It is found in the cell membrane. It catalyses the reaction [protein]-peptidylproline (omega=180) = [protein]-peptidylproline (omega=0). Plays a major role in protein secretion by helping the post-translocational extracellular folding of several secreted proteins. This Listeria monocytogenes serotype 4b (strain F2365) protein is Foldase protein PrsA 2.